A 263-amino-acid chain; its full sequence is Ribosomal RNA small subunit methyltransferase J (263 aa).

Residues 115–116, 131–132, and D181 contribute to the S-adenosyl-L-methionine site; these read RD and ER.

The protein belongs to the methyltransferase superfamily. RsmJ family.

It is found in the cytoplasm. The catalysed reaction is guanosine(1516) in 16S rRNA + S-adenosyl-L-methionine = N(2)-methylguanosine(1516) in 16S rRNA + S-adenosyl-L-homocysteine + H(+). Specifically methylates the guanosine in position 1516 of 16S rRNA. The protein is Ribosomal RNA small subunit methyltransferase J of Hahella chejuensis (strain KCTC 2396).